The primary structure comprises 193 residues: Interleukin-18 (193 aa).

Residues 1–36 (MAANLIEDNCINLVKMKFVNNTLYFKAESDEGLESD) constitute a propeptide that is removed on maturation.

It belongs to the IL-1 family. In terms of assembly, forms a ternary complex with ligand-binding receptor subunit IL18R1 and signaling receptor subunit IL18RAP at the plasma membrane. Mature IL18 first binds to IL18R1 forming a low affinity binary complex, which then interacts with IL18RAP to form a high affinity ternary complex that signals inside the cell. Interacts with cargo receptor TMED10; the interaction mediates the translocation from the cytoplasm into the ERGIC (endoplasmic reticulum-Golgi intermediate compartment) and thereby secretion. Post-translationally, the pro-IL-18 precursor is processed by CASP1, CASP4 or CASP5 to yield its mature, active form. The pro-IL-18 precursor features autoinhibitory interactions between the propeptide and the post-cleavage-site region, preventing recognition by the IL18R1 receptor. Processing by CASP1, CASP4 or CASP5 induces conformational changes to generate critical receptor-binding sites. The mature form is then secreted and released in the extracellular milieu by passing through the gasdermin-D (GSDMD) pore. In contrast, cleavage by CASP3 inactivates IL18.

It is found in the cytoplasm. The protein resides in the cytosol. Its subcellular location is the secreted. Pro-inflammatory cytokine primarily involved in epithelial barrier repair, polarized T-helper 1 (Th1) cell and natural killer (NK) cell immune responses. Upon binding to IL18R1 and IL18RAP, forms a signaling ternary complex which activates NF-kappa-B, triggering synthesis of inflammatory mediators. Synergizes with IL12/interleukin-12 to induce IFNG synthesis from T-helper 1 (Th1) cells and natural killer (NK) cells. Involved in transduction of inflammation downstream of pyroptosis: its mature form is specifically released in the extracellular milieu by passing through the gasdermin-D (GSDMD) pore. The sequence is that of Interleukin-18 (IL18) from Canis lupus familiaris (Dog).